The following is a 339-amino-acid chain: Dihydroorotate dehydrogenase (quinone) (339 aa).

FMN is bound by residues 62–66 and T86; that span reads AGMDK. K66 provides a ligand contact to substrate. 111–115 provides a ligand contact to substrate; that stretch reads NRMGF. Residues N139 and N172 each coordinate FMN. N172 contributes to the substrate binding site. The active-site Nucleophile is S175. Residue N177 participates in substrate binding. K217 and T245 together coordinate FMN. 246-247 contacts substrate; it reads NT. FMN-binding positions include G268, G297, and 318 to 319; that span reads YS.

The protein belongs to the dihydroorotate dehydrogenase family. Type 2 subfamily. In terms of assembly, monomer. Requires FMN as cofactor.

The protein resides in the cell membrane. The catalysed reaction is (S)-dihydroorotate + a quinone = orotate + a quinol. The protein operates within pyrimidine metabolism; UMP biosynthesis via de novo pathway; orotate from (S)-dihydroorotate (quinone route): step 1/1. Functionally, catalyzes the conversion of dihydroorotate to orotate with quinone as electron acceptor. This chain is Dihydroorotate dehydrogenase (quinone), found in Shewanella piezotolerans (strain WP3 / JCM 13877).